Here is a 364-residue protein sequence, read N- to C-terminus: Alanine racemase (364 aa).

The Proton acceptor; specific for D-alanine role is filled by K35. Residue K35 is modified to N6-(pyridoxal phosphate)lysine. R132 contributes to the substrate binding site. The Proton acceptor; specific for L-alanine role is filled by Y260. Substrate is bound at residue M308.

This sequence belongs to the alanine racemase family. Pyridoxal 5'-phosphate serves as cofactor.

The enzyme catalyses L-alanine = D-alanine. It participates in amino-acid biosynthesis; D-alanine biosynthesis; D-alanine from L-alanine: step 1/1. Its function is as follows. Catalyzes the interconversion of L-alanine and D-alanine. May also act on other amino acids. This Acidithiobacillus ferrooxidans (strain ATCC 23270 / DSM 14882 / CIP 104768 / NCIMB 8455) (Ferrobacillus ferrooxidans (strain ATCC 23270)) protein is Alanine racemase (alr).